The chain runs to 403 residues: Golgin-45 (403 aa).

Residues 1-63 form a disordered region; sequence MEKMTTLKSS…PRKKVSSDSP (63 aa). Positions 22-26 match the Tankyrase-binding motif motif; sequence RGAGD. Ser53 is modified (phosphoserine). The stretch at 123 to 216 forms a coiled coil; the sequence is RKELSEVKKV…QLERMSIQCD (94 aa). Ser356 carries the post-translational modification Phosphoserine. Residues 397–403 form an essential for interaction with GORASP2 region; it reads QGELIAL.

As to quaternary structure, interacts with GORASP2. Interacts with the GTP-bound form of RAB2, but not with other Golgi Rab proteins. Identified in a complex with RAB2 and GORASP2. ADP-ribosylated by tankyrase TNKS and TNKS2. Poly-ADP-ribosylated protein is recognized by RNF146, followed by ubiquitination. In terms of processing, ubiquitinated by RNF146 when poly-ADP-ribosylated, leading to its degradation.

The protein localises to the golgi apparatus membrane. Its function is as follows. Required for normal Golgi structure and for protein transport from the endoplasmic reticulum (ER) through the Golgi apparatus to the cell surface. This is Golgin-45 (Blzf1) from Mus musculus (Mouse).